We begin with the raw amino-acid sequence, 480 residues long: Vinorine hydroxylase (480 aa).

Residues 3 to 23 (LLQILLAIAGLLAILLLQKQW) form a helical membrane-spanning segment. Position 418 (Cys418) interacts with heme.

Belongs to the cytochrome P450 family. Heme serves as cofactor. As to expression, mainly expressed in roots and, to a lesser extent, in leaves.

Its subcellular location is the membrane. It carries out the reaction vinorine + reduced [NADPH--hemoprotein reductase] + O2 = vomilenine + oxidized [NADPH--hemoprotein reductase] + H2O + H(+). The catalysed reaction is vomilenine = perakine. The protein operates within alkaloid biosynthesis; ajmaline biosynthesis. A cytochrome P450 monooxygenase involved in the biosynthesis of ajmaline-type monoterpenoid indole alkaloids (MIAs) natural products, important plant-derived pharmaceuticals used in the therapy of heart disorders. Catalyzes the hydroxylation of vinorine to vomilenine, an intermediate chemical in the biosynthesis of ajmaline. Supports also vomilenine isomerization to perakine. This Rauvolfia serpentina (Serpentine wood) protein is Vinorine hydroxylase.